Reading from the N-terminus, the 85-residue chain is UPF0291 protein SSA_1878 (85 aa).

The tract at residues 58 to 85 (GNDVTPEKLRQVQREKGLHGRSLDDPES) is disordered. Residues 62-85 (TPEKLRQVQREKGLHGRSLDDPES) show a composition bias toward basic and acidic residues.

The protein belongs to the UPF0291 family.

The protein resides in the cytoplasm. This Streptococcus sanguinis (strain SK36) protein is UPF0291 protein SSA_1878.